The primary structure comprises 599 residues: CAP-Gly domain-containing linker protein 4 (599 aa).

3 ANK repeats span residues 65–101 (TSVS…NVND), 149–180 (TNMN…DVDA), and 186–215 (NFGT…NPAF). Positions 303–345 (GTTEFASGQWAGIELDEPEGKNNGSVGRVQYFKCAPKYGIFAP) constitute a CAP-Gly 1 domain. The interval 387-482 (SGLMTSKKEN…TSAANNTHRE (96 aa)) is disordered. Residues 443-462 (LSTSSSSGKKTLSKSPSLPS) are compositionally biased toward low complexity. Residues 468–478 (LKSSTTSAANN) show a composition bias toward polar residues. The CAP-Gly 2 domain maps to 505–547 (GTTNFAPGYWYGIELEKPHGKNDGSVGGVQYFSCSPRYGIFAP). Residue Ser557 is modified to Phosphoserine. The disordered stretch occupies residues 565–599 (SSNKQNHSYPGFRRSFSTTSASSQKEINRRNAFAK). Low complexity predominate over residues 576–587 (FRRSFSTTSASS).

The sequence is that of CAP-Gly domain-containing linker protein 4 (Clip4) from Rattus norvegicus (Rat).